The chain runs to 495 residues: Glycerol kinase (495 aa).

Threonine 13 is a binding site for ADP. ATP contacts are provided by threonine 13, threonine 14, and serine 15. Sn-glycerol 3-phosphate is bound at residue threonine 13. Residue arginine 17 participates in ADP binding. Positions 83, 84, 135, and 244 each coordinate sn-glycerol 3-phosphate. Arginine 83, glutamate 84, tyrosine 135, aspartate 244, and glutamine 245 together coordinate glycerol. 2 residues coordinate ADP: threonine 266 and glycine 309. Threonine 266, glycine 309, glutamine 313, and glycine 410 together coordinate ATP. ADP is bound by residues glycine 410 and asparagine 414.

Belongs to the FGGY kinase family.

It catalyses the reaction glycerol + ATP = sn-glycerol 3-phosphate + ADP + H(+). It functions in the pathway polyol metabolism; glycerol degradation via glycerol kinase pathway; sn-glycerol 3-phosphate from glycerol: step 1/1. Its activity is regulated as follows. Inhibited by fructose 1,6-bisphosphate (FBP). Key enzyme in the regulation of glycerol uptake and metabolism. Catalyzes the phosphorylation of glycerol to yield sn-glycerol 3-phosphate. In Shewanella sediminis (strain HAW-EB3), this protein is Glycerol kinase.